The chain runs to 523 residues: UvrABC system protein C (523 aa).

Residues 15–93 (HLPGCYLFKD…IKKHWPRYNI (79 aa)) form the GIY-YIG domain. The region spanning 197–232 (RELIESMETEMKEMAAKQMFEQAMELRDEIAALEYL) is the UVR domain.

Belongs to the UvrC family. As to quaternary structure, interacts with UvrB in an incision complex.

The protein resides in the cytoplasm. Functionally, the UvrABC repair system catalyzes the recognition and processing of DNA lesions. UvrC both incises the 5' and 3' sides of the lesion. The N-terminal half is responsible for the 3' incision and the C-terminal half is responsible for the 5' incision. This is UvrABC system protein C from Methanosarcina mazei (strain ATCC BAA-159 / DSM 3647 / Goe1 / Go1 / JCM 11833 / OCM 88) (Methanosarcina frisia).